The sequence spans 252 residues: Curing of [URE3] protein 1 (252 aa).

Its subcellular location is the nucleus. Involved in the curing of prion [URE3]. Nuclear localization of this protein may suggest a role in transcription regulation, so it might exert an effect on [URE3] through known prion-curing chaperones or BTN2. The chain is Curing of [URE3] protein 1 (CUR1) from Saccharomyces cerevisiae (strain ATCC 204508 / S288c) (Baker's yeast).